Consider the following 142-residue polypeptide: UPF0310 protein PYRAB08750 (142 aa).

Belongs to the UPF0310 family.

The protein is UPF0310 protein PYRAB08750 of Pyrococcus abyssi (strain GE5 / Orsay).